A 278-amino-acid chain; its full sequence is MTGFGARLAEAKAHRGPLCLGIDPHPELLRAWDLPATADGLAAFCDICVAAFAGFAVVKPQVAFFEAYGAAGFAVLEGTMAALRANGVLVLADAKRGDIGSTMAAYAAAWAGDSPLAADAVTVSPFLGFGSLRPLLEVATANDRGVFVLAATSNPEGATIQRADADGRTVAQLIVDQVGLFNSEVGEVTGSEPGSVGVVVGATVLNPPDVSGLGGPVLVPGVGVQGGRPEALGGLGGAAPQQLLPAVSREVLRAGPSISEVRAAAERMLDSVAYLSAV.

Lys95 functions as the Proton donor in the catalytic mechanism.

This sequence belongs to the OMP decarboxylase family. Type 2 subfamily.

It carries out the reaction orotidine 5'-phosphate + H(+) = UMP + CO2. It functions in the pathway pyrimidine metabolism; UMP biosynthesis via de novo pathway; UMP from orotate: step 2/2. This Mycobacterium ulcerans (strain Agy99) protein is Orotidine 5'-phosphate decarboxylase.